The following is a 712-amino-acid chain: TGF-beta-activated kinase 1 and MAP3K7-binding protein 3 (712 aa).

Position 2 is an N-acetylalanine (A2). The region spanning 8 to 51 (LDIQVLHDLRQRFPEIPEGVVSQCMLQNNNNLEACCRALSQESS) is the CUE domain. 3 positions are modified to phosphoserine: S60, S101, and S103. Disordered stretches follow at residues 141 to 189 (FMNE…HIPR), 227 to 345 (PGSI…KQGS), 369 to 447 (TVEP…SPRV), and 475 to 509 (ERSAAPEPIQPISVIPGSGGEKGSHKYQRSSSSGS). Positions 163–173 (MQTGMNPSAMQ) are enriched in polar residues. 2 stretches are compositionally biased toward low complexity: residues 233-249 (RQTSQSSSGRQTPQSTP) and 269-290 (YPHQQNYQPSQYSPKQQQIPQS). Over residues 322-332 (PPSPSTTPPHP) the composition is skewed to pro residues. 2 stretches are compositionally biased toward polar residues: residues 336–345 (GPPSYQKQGS) and 371–404 (EPSQRPGTAINRSPSPISNQPSPRNQHSLYTATT). S385 is subject to Phosphoserine. Residue T404 is modified to Phosphothreonine. Positions 405 to 417 (PPSSSPSRGISSQ) are enriched in low complexity. A phosphoserine mark is found at S409 and S492. A Phosphoserine; by MAPKAPK2 and MAPKAPK3 modification is found at S506. The stretch at 517-559 (ALLLHQRARMERLAKQLKLEKEELERLKSEVNGMEHDLMQRRL) forms a coiled coil. The disordered stretch occupies residues 609-636 (MNNFYDNIEPGPVVPPKPSKKDSSDPCT). Positions 627 to 636 (SKKDSSDPCT) are enriched in basic and acidic residues. A Glycyl lysine isopeptide (Lys-Gly) (interchain with G-Cter in ubiquitin) cross-link involves residue K649. A compositionally biased stretch (basic and acidic residues) spans 658–667 (QAAAADEHRT). The tract at residues 658-682 (QAAAADEHRTGSTQSPRTQPRDEDY) is disordered. The segment at 682–712 (YEGAPWNCDSCTFLNHPALNRCEQCEMPRYT) adopts a RanBP2-type zinc-finger fold. C692 bears the (Microbial infection) S-methylcysteine mark.

In terms of assembly, interacts with TAB1, TAB2, MAP3K7, TRAF2 and TRAF6. The minimal TAB3-containing complex (TAB1-MAP3K7-TAB3) appears not to contain TAB2. However, it seems sensible to consider that TAB2 may also join this complex and may act in a cooperative manner with TAB3. Interacts with DYNC2I2 (via the WD domains). Interacts with RBCK1. Binds 'Lys-63'-linked polyubiquitin chains. Interacts with TRIM5. Interacts with TRIM38 (via B30.2/SPRY domain), leading to its translocation to lysosomes and degradation. Interacts with ASB1. As to quaternary structure, (Microbial infection) Interacts with M.tuberculosis PtpA, which blocks the NF-kappa-B signaling pathway. Post-translationally, ubiquitinated; following IL1 stimulation or TRAF6 overexpression. Ubiquitinated by AMFR via 'Lys-27'-linked polyubiquitination; leading to TAK1/MAP3K7 activation. Degraded in a lysosome-dependent manner following interaction with TRIM38. In terms of processing, phosphorylated at Ser-506 by MAPKAPK2 and MAPKAPK3 following IL1 treatment. Post-translationally, (Microbial infection) Methylated at Cys-692 by enteropathogenic E.coli protein NleE or S.flexneri protein OspZ: methylation disrupts zinc-binding and ability to bind 'Lys-63'-linked ubiquitin, leading to NF-kappa-B inactivation. As to expression, widely expressed. Constitutively overexpressed in certain tumor tissues. In terms of tissue distribution, major transcript. Minor transcript.

Its function is as follows. Adapter required to activate the JNK and NF-kappa-B signaling pathways through the specific recognition of 'Lys-63'-linked polyubiquitin chains by its RanBP2-type zinc finger (NZF). Acts as an adapter linking MAP3K7/TAK1 and TRAF6 to 'Lys-63'-linked polyubiquitin chains. The RanBP2-type zinc finger (NZF) specifically recognizes Lys-63'-linked polyubiquitin chains unanchored or anchored to the substrate proteins such as RIPK1/RIP1 and RIPK2: this acts as a scaffold to organize a large signaling complex to promote autophosphorylation of MAP3K7/TAK1, and subsequent activation of I-kappa-B-kinase (IKK) core complex by MAP3K7/TAK1. Functionally, may be an oncogenic factor. In Homo sapiens (Human), this protein is TGF-beta-activated kinase 1 and MAP3K7-binding protein 3.